We begin with the raw amino-acid sequence, 773 residues long: uncharacterized protein (773 aa).

Positions 192 to 219 are disordered; it reads EASGTNNNPKEIEMNSDTTSSVPKSGST.

It localises to the cytoplasm. This is an uncharacterized protein from Schizosaccharomyces pombe (strain 972 / ATCC 24843) (Fission yeast).